The chain runs to 86 residues: Large ribosomal subunit protein bL27 (86 aa).

The tract at residues 1-26 is disordered; it reads MASKKAGGSTKNGRDSQSKRLGVKRF.

This sequence belongs to the bacterial ribosomal protein bL27 family.

In Bdellovibrio bacteriovorus (strain ATCC 15356 / DSM 50701 / NCIMB 9529 / HD100), this protein is Large ribosomal subunit protein bL27.